A 312-amino-acid chain; its full sequence is Malate dehydrogenase (312 aa).

NAD(+) contacts are provided by residues 7-13 (GAAGGIG) and Asp34. Positions 81 and 87 each coordinate substrate. Residues Asn94 and 117–119 (ITN) each bind NAD(+). The substrate site is built by Asn119 and Arg153. His177 functions as the Proton acceptor in the catalytic mechanism. Met228 contacts NAD(+).

Belongs to the LDH/MDH superfamily. MDH type 1 family. As to quaternary structure, homodimer.

The catalysed reaction is (S)-malate + NAD(+) = oxaloacetate + NADH + H(+). In terms of biological role, catalyzes the reversible oxidation of malate to oxaloacetate. This is Malate dehydrogenase from Mannheimia succiniciproducens (strain KCTC 0769BP / MBEL55E).